An 882-amino-acid polypeptide reads, in one-letter code: Translation initiation factor IF-2 (882 aa).

Disordered stretches follow at residues 67–202 and 223–278; these read KTVS…EKAR and ERYG…KHMK. Basic and acidic residues-rich tracts occupy residues 95 to 152 and 161 to 202; these read VKRD…EAKA and EQPK…EKAR. Residues 251–264 are compositionally biased toward basic residues; it reads GRRNRNKTQTKSKR. A compositionally biased stretch (basic and acidic residues) spans 265-274; it reads GGKDAREGRE. A tr-type G domain is found at 382-551; the sequence is PRAPVVTIMG…LLQAEVLELK (170 aa). A G1 region spans residues 391–398; sequence GHVDHGKT. 391–398 contributes to the GTP binding site; it reads GHVDHGKT. The G2 stretch occupies residues 416 to 420; sequence GITQH. Residues 437–440 are G3; sequence DTPG. GTP contacts are provided by residues 437–441 and 491–494; these read DTPGH and NKMD. Residues 491–494 are G4; it reads NKMD. The tract at residues 527–529 is G5; that stretch reads SAK.

This sequence belongs to the TRAFAC class translation factor GTPase superfamily. Classic translation factor GTPase family. IF-2 subfamily.

The protein resides in the cytoplasm. In terms of biological role, one of the essential components for the initiation of protein synthesis. Protects formylmethionyl-tRNA from spontaneous hydrolysis and promotes its binding to the 30S ribosomal subunits. Also involved in the hydrolysis of GTP during the formation of the 70S ribosomal complex. The protein is Translation initiation factor IF-2 of Shewanella amazonensis (strain ATCC BAA-1098 / SB2B).